The primary structure comprises 400 residues: Phosphoglycerate kinase (400 aa).

Substrate contacts are provided by residues 23–25, Arg-38, 61–64, Arg-120, and Arg-153; these read DLN and HFGR. ATP-binding positions include Lys-203, Glu-325, and 355–358; that span reads GGDT.

It belongs to the phosphoglycerate kinase family. Monomer.

The protein resides in the cytoplasm. It carries out the reaction (2R)-3-phosphoglycerate + ATP = (2R)-3-phospho-glyceroyl phosphate + ADP. Its pathway is carbohydrate degradation; glycolysis; pyruvate from D-glyceraldehyde 3-phosphate: step 2/5. The protein is Phosphoglycerate kinase of Methylorubrum populi (strain ATCC BAA-705 / NCIMB 13946 / BJ001) (Methylobacterium populi).